The sequence spans 607 residues: Nexilin (607 aa).

Basic and acidic residues predominate over residues 1 to 14 (MNDVSQKAEIKEML). Disordered stretches follow at residues 1-143 (MNDV…EDKM) and 165-268 (ETEA…RRRI). Residue serine 16 is modified to Phosphoserine. Basic and acidic residues-rich tracts occupy residues 40–85 (GKFD…RAEQ), 120–143 (KTKD…EDKM), 167–221 (EAKK…HMVN), and 228–268 (DRET…RRRI). Serine 172 carries the phosphoserine modification. 3 positions are modified to phosphoserine: serine 281, serine 288, and serine 296. Threonine 301 is subject to Phosphothreonine. Disordered stretches follow at residues 419-444 (NFHE…KVNM) and 480-514 (AALQ…GAPW). 2 positions are modified to phosphoserine: serine 495 and serine 500. Threonine 502 carries the phosphothreonine modification. The region spanning 513–601 (PWFKKPLRNT…GSAASTCILT (89 aa)) is the Ig-like domain.

In terms of assembly, interacts with F-actin.

Its subcellular location is the cytoplasm. The protein resides in the cytoskeleton. It is found in the cell junction. The protein localises to the adherens junction. It localises to the myofibril. Its subcellular location is the sarcomere. The protein resides in the z line. Functionally, involved in regulating cell migration through association with the actin cytoskeleton. Has an essential role in the maintenance of Z line and sarcomere integrity. In Mus musculus (Mouse), this protein is Nexilin.